Here is a 299-residue protein sequence, read N- to C-terminus: N-carbamoylputrescine amidase (299 aa).

Positions 10–268 (VVVSSLQFAC…EAVLVAQFDL (259 aa)) constitute a CN hydrolase domain. Catalysis depends on Glu49, which acts as the Proton acceptor. Lys122 functions as the Proton donor in the catalytic mechanism. Cys159 acts as the Nucleophile in catalysis.

This sequence belongs to the carbon-nitrogen hydrolase superfamily. Homooctamer (isoform 2). Expressed in roots, stems, leaves and flowers.

It carries out the reaction N-carbamoylputrescine + H2O + 2 H(+) = putrescine + NH4(+) + CO2. It participates in amine and polyamine biosynthesis; putrescine biosynthesis via agmatine pathway; putrescine from N-carbamoylputrescine (amidase route): step 1/1. Involved in polyamine biosynthesis. Catalyzes the hydrolysis of N-carbamoylputrescine to produce putrescine and ammonia. This chain is N-carbamoylputrescine amidase, found in Arabidopsis thaliana (Mouse-ear cress).